We begin with the raw amino-acid sequence, 578 residues long: Putative ankyrin repeat protein FPV022 (578 aa).

ANK repeat units follow at residues 4-34 (RRKS…DLNK), 38-67 (KNRT…KMSA), 68-97 (CKVP…SVDV), 100-129 (KGET…SGPY), 160-189 (YGHT…ITDN), 222-251 (EGTT…DPKV), 255-287 (HSVS…MVNM), 320-349 (YLSE…NINK), 353-382 (YGNI…DVNA), 386-415 (DGNT…DINS), and 419-449 (NGRT…KKNK).

In Fowlpox virus (strain NVSL) (FPV), this protein is Putative ankyrin repeat protein FPV022.